The sequence spans 148 residues: SsrA-binding protein (148 aa).

The segment at 123–148 is disordered; that stretch reads KLHDKRETEKKRDWEREKARIMRSAT. Over residues 126 to 142 the composition is skewed to basic and acidic residues; sequence DKRETEKKRDWEREKAR.

Belongs to the SmpB family.

Its subcellular location is the cytoplasm. In terms of biological role, required for rescue of stalled ribosomes mediated by trans-translation. Binds to transfer-messenger RNA (tmRNA), required for stable association of tmRNA with ribosomes. tmRNA and SmpB together mimic tRNA shape, replacing the anticodon stem-loop with SmpB. tmRNA is encoded by the ssrA gene; the 2 termini fold to resemble tRNA(Ala) and it encodes a 'tag peptide', a short internal open reading frame. During trans-translation Ala-aminoacylated tmRNA acts like a tRNA, entering the A-site of stalled ribosomes, displacing the stalled mRNA. The ribosome then switches to translate the ORF on the tmRNA; the nascent peptide is terminated with the 'tag peptide' encoded by the tmRNA and targeted for degradation. The ribosome is freed to recommence translation, which seems to be the essential function of trans-translation. This Burkholderia thailandensis (strain ATCC 700388 / DSM 13276 / CCUG 48851 / CIP 106301 / E264) protein is SsrA-binding protein.